Consider the following 71-residue polypeptide: UPF0346 protein MGAS2096_Spy0401 (71 aa).

This sequence belongs to the UPF0346 family.

The sequence is that of UPF0346 protein MGAS2096_Spy0401 from Streptococcus pyogenes serotype M12 (strain MGAS2096).